The sequence spans 634 residues: Ankyrin repeat protein OPG025 (634 aa).

ANK repeat units lie at residues 36-69 (DGET…YKNI), 70-100 (NDFD…EINS), 103-134 (NGIN…PTCS), 175-211 (MGKT…EMRY), 307-337 (IQDL…TLYR), and 412-441 (HGCS…DINI).

The protein belongs to the orthopoxvirus OPG025 family. Interacts with components of host SCF complex CUL1 and SKP1 and components of the cullin deneddylation/COP9 signalosome complex subunits COPS7A and COPS7B.

Its function is as follows. Plays a role in the inhibition of host immune repsonse by counteracting the action of interferons on early events in the viral replication cycle. The polypeptide is Ankyrin repeat protein OPG025 (OPG025) (Vaccinia virus (strain Copenhagen) (VACV)).